A 193-amino-acid chain; its full sequence is Protein PrsJ (193 aa).

Positions 1-27 (MVVNKTTAVLYLIALSLSGFIHTFLRA) are cleaved as a signal peptide.

It is found in the periplasm. In terms of biological role, this protein maintains pilus integrity and thus is an important participant in pilus assembly. It may function as molecular chaperone directly or indirectly in the correct assembly of PapA subunits. This chain is Protein PrsJ (prsJ), found in Escherichia coli.